We begin with the raw amino-acid sequence, 501 residues long: Sarpagan bridge enzyme (501 aa).

Residues 3 to 23 (VMQLSFSYPALFLFVFFLFML) form a helical; Signal-anchor for type II membrane protein membrane-spanning segment. Cys-441 is a heme binding site.

This sequence belongs to the cytochrome P450 family. The cofactor is heme. As to expression, highly expressed in roots. Expressed at low levels in stems.

It localises to the endoplasmic reticulum membrane. It carries out the reaction (19E)-geissoschizine + reduced [NADPH--hemoprotein reductase] + O2 = polyneuridine aldehyde + oxidized [NADPH--hemoprotein reductase] + 2 H2O + H(+). The catalysed reaction is tetrahydroalstonine + A + reduced [NADPH--hemoprotein reductase] + O2 = alstonine + AH2 + oxidized [NADPH--hemoprotein reductase] + 2 H2O + H(+). It catalyses the reaction ajmalicine + A + reduced [NADPH--hemoprotein reductase] + O2 = serpentine + AH2 + oxidized [NADPH--hemoprotein reductase] + 2 H2O + H(+). It functions in the pathway alkaloid biosynthesis; ajmaline biosynthesis. Its function is as follows. Monooxygenase involved in the biosynthesis of ajmaline-type monoterpenoid indole alkaloids (MIAs) natural products, important plant-derived pharmaceuticals used in the therapy of heart disorders. Converts by cyclization the strictosidine-derived geissoschizine to the sarpagan alkaloid polyneuridine aldehyde, precursor of vomilenine, an intermediate chemical in the biosynthesis of ajmaline. Converts by aromatization the tetrahydro-beta-carboline alkaloids tetrahydroalstonine and ajmalicine to the corresponding beta-carboline alkaloids alstonine and serpentine, respectively. This Gelsemium sempervirens (Carolina jasmine) protein is Sarpagan bridge enzyme.